A 311-amino-acid chain; its full sequence is Urease accessory protein UreD 3 (311 aa).

The protein belongs to the UreD family. In terms of assembly, ureD, UreF and UreG form a complex that acts as a GTP-hydrolysis-dependent molecular chaperone, activating the urease apoprotein by helping to assemble the nickel containing metallocenter of UreC. The UreE protein probably delivers the nickel.

The protein resides in the cytoplasm. Its function is as follows. Required for maturation of urease via the functional incorporation of the urease nickel metallocenter. This Methylorubrum populi (strain ATCC BAA-705 / NCIMB 13946 / BJ001) (Methylobacterium populi) protein is Urease accessory protein UreD 3.